The chain runs to 69 residues: Small, acid-soluble spore protein I (69 aa).

It belongs to the SspI family.

Its subcellular location is the spore core. The sequence is that of Small, acid-soluble spore protein I from Shouchella clausii (strain KSM-K16) (Alkalihalobacillus clausii).